The chain runs to 549 residues: Cation/acetate symporter ActP (549 aa).

Helical transmembrane passes span 33 to 53 (WQAI…TYWA), 77 to 97 (LAIA…ALVF), 103 to 123 (GLIY…LIAE), 148 to 168 (ILSA…QMVG), 183 to 203 (IAVV…GMLA), 206 to 226 (WVQI…AFMV), 262 to 282 (ISAL…PHIL), 303 to 323 (GFMG…IMLV), 355 to 375 (LFLG…VAGL), 404 to 424 (VSKI…FLFE), 428 to 448 (IAFM…PIIL), 464 to 484 (GGWL…TIWV), and 493 to 513 (IFPY…GIWF).

Belongs to the sodium:solute symporter (SSF) (TC 2.A.21) family.

It localises to the cell inner membrane. Its function is as follows. Transports acetate. The polypeptide is Cation/acetate symporter ActP (Salmonella paratyphi C (strain RKS4594)).